Consider the following 196-residue polypeptide: DnaA initiator-associating protein DiaA (196 aa).

Residues Leu-34 to Asp-196 enclose the SIS domain.

It belongs to the SIS family. DiaA subfamily. In terms of assembly, homotetramer; dimer of dimers.

Its function is as follows. Required for the timely initiation of chromosomal replication via direct interactions with the DnaA initiator protein. This chain is DnaA initiator-associating protein DiaA, found in Salmonella paratyphi A (strain ATCC 9150 / SARB42).